A 420-amino-acid chain; its full sequence is Serine hydroxymethyltransferase (420 aa).

(6S)-5,6,7,8-tetrahydrofolate contacts are provided by residues Leu-121 and 125–127; that span reads GHL. Lys-230 bears the N6-(pyridoxal phosphate)lysine mark. Residues Glu-246 and 354 to 356 contribute to the (6S)-5,6,7,8-tetrahydrofolate site; that span reads SPF.

It belongs to the SHMT family. In terms of assembly, homodimer. The cofactor is pyridoxal 5'-phosphate.

It localises to the cytoplasm. It carries out the reaction (6R)-5,10-methylene-5,6,7,8-tetrahydrofolate + glycine + H2O = (6S)-5,6,7,8-tetrahydrofolate + L-serine. The protein operates within one-carbon metabolism; tetrahydrofolate interconversion. Its pathway is amino-acid biosynthesis; glycine biosynthesis; glycine from L-serine: step 1/1. Its function is as follows. Catalyzes the reversible interconversion of serine and glycine with tetrahydrofolate (THF) serving as the one-carbon carrier. This reaction serves as the major source of one-carbon groups required for the biosynthesis of purines, thymidylate, methionine, and other important biomolecules. Also exhibits THF-independent aldolase activity toward beta-hydroxyamino acids, producing glycine and aldehydes, via a retro-aldol mechanism. The sequence is that of Serine hydroxymethyltransferase from Rickettsia akari (strain Hartford).